Reading from the N-terminus, the 171-residue chain is NADH-quinone oxidoreductase subunit B 1 (171 aa).

Residues Cys-44, Cys-45, Cys-110, and Cys-139 each contribute to the [4Fe-4S] cluster site.

Belongs to the complex I 20 kDa subunit family. NDH-1 is composed of 14 different subunits. Subunits NuoB, C, D, E, F, and G constitute the peripheral sector of the complex. Requires [4Fe-4S] cluster as cofactor.

It is found in the cell inner membrane. It catalyses the reaction a quinone + NADH + 5 H(+)(in) = a quinol + NAD(+) + 4 H(+)(out). Functionally, NDH-1 shuttles electrons from NADH, via FMN and iron-sulfur (Fe-S) centers, to quinones in the respiratory chain. The immediate electron acceptor for the enzyme in this species is believed to be ubiquinone. Couples the redox reaction to proton translocation (for every two electrons transferred, four hydrogen ions are translocated across the cytoplasmic membrane), and thus conserves the redox energy in a proton gradient. This chain is NADH-quinone oxidoreductase subunit B 1, found in Opitutus terrae (strain DSM 11246 / JCM 15787 / PB90-1).